Consider the following 167-residue polypeptide: Peptide deformylase (167 aa).

The Fe cation site is built by Cys91 and His133. Glu134 is an active-site residue. His137 serves as a coordination point for Fe cation.

It belongs to the polypeptide deformylase family. Fe(2+) serves as cofactor.

The enzyme catalyses N-terminal N-formyl-L-methionyl-[peptide] + H2O = N-terminal L-methionyl-[peptide] + formate. Its function is as follows. Removes the formyl group from the N-terminal Met of newly synthesized proteins. Requires at least a dipeptide for an efficient rate of reaction. N-terminal L-methionine is a prerequisite for activity but the enzyme has broad specificity at other positions. This chain is Peptide deformylase, found in Neisseria gonorrhoeae (strain ATCC 700825 / FA 1090).